Consider the following 578-residue polypeptide: Keratin, type II cytoskeletal 1b (578 aa).

The head stretch occupies residues 1 to 163 (MSHQFSSQSA…DPEIQRIKTQ (163 aa)). Omega-N-methylarginine is present on Arg-95. A coil 1A region spans residues 164 to 200 (EREQIMVLNNKFASFIDKVRFLEQQNQVLQTKWELLQ). An IF rod domain is found at 164 to 477 (EREQIMVLNN…QLLEGEESRM (314 aa)). A linker 1 region spans residues 201-219 (QVNTSTGTNNLEPLLENYI). Positions 220 to 311 (GDLRRQVDLL…LFLTELSQVQ (92 aa)) are coil 1B. The linker 12 stretch occupies residues 312–335 (THISDTNVILSMDNNRSLDLDSII). Residues 336-474 (DAVRTQYELI…TYRQLLEGEE (139 aa)) are coil 2. The tail stretch occupies residues 475–578 (SRMSGELQSH…TNTSHRRILE (104 aa)). Position 523 is an omega-N-methylarginine (Arg-523). Positions 547 to 556 (GSYGGSGRSG) are enriched in gly residues. The segment at 547-578 (GSYGGSGRSGRGSSRVQIIQTSTNTSHRRILE) is disordered. The segment covering 562-571 (VQIIQTSTNT) has biased composition (polar residues).

This sequence belongs to the intermediate filament family. Undergoes deimination of some arginine residues (citrullination). Expressed exclusively in skin.

The chain is Keratin, type II cytoskeletal 1b (KRT77) from Homo sapiens (Human).